An 833-amino-acid polypeptide reads, in one-letter code: Leucine--tRNA ligase (833 aa).

The 'HIGH' region signature appears at 41–52; it reads PYPSGAGLHVGH. Residues 610-614 carry the 'KMSKS' region motif; the sequence is KMSKS. Lys613 contributes to the ATP binding site.

Belongs to the class-I aminoacyl-tRNA synthetase family.

The protein resides in the cytoplasm. The enzyme catalyses tRNA(Leu) + L-leucine + ATP = L-leucyl-tRNA(Leu) + AMP + diphosphate. The polypeptide is Leucine--tRNA ligase (Streptococcus equi subsp. equi (strain 4047)).